Here is a 293-residue protein sequence, read N- to C-terminus: 4-hydroxy-tetrahydrodipicolinate synthase (293 aa).

A pyruvate-binding site is contributed by Thr-44. Tyr-132 functions as the Proton donor/acceptor in the catalytic mechanism. The active-site Schiff-base intermediate with substrate is the Lys-162. A pyruvate-binding site is contributed by Ile-204.

Belongs to the DapA family. In terms of assembly, homotetramer; dimer of dimers.

The protein resides in the cytoplasm. It catalyses the reaction L-aspartate 4-semialdehyde + pyruvate = (2S,4S)-4-hydroxy-2,3,4,5-tetrahydrodipicolinate + H2O + H(+). It functions in the pathway amino-acid biosynthesis; L-lysine biosynthesis via DAP pathway; (S)-tetrahydrodipicolinate from L-aspartate: step 3/4. Its function is as follows. Catalyzes the condensation of (S)-aspartate-beta-semialdehyde [(S)-ASA] and pyruvate to 4-hydroxy-tetrahydrodipicolinate (HTPA). In Erythrobacter litoralis (strain HTCC2594), this protein is 4-hydroxy-tetrahydrodipicolinate synthase.